An 850-amino-acid polypeptide reads, in one-letter code: Penicillin-binding protein 1A (850 aa).

Topologically, residues 1–5 (MKFVK) are cytoplasmic. A helical; Signal-anchor for type II membrane protein transmembrane segment spans residues 6-26 (YFLILAVCCILLGAGSIYGLY). The Periplasmic portion of the chain corresponds to 27-850 (RYIEPQLPDV…IDNGEAQELF (824 aa)). The segment at 48-216 (MQIYSADGEL…STFNPLYSMD (169 aa)) is transglycosylase. The Proton donor; for transglycosylase activity role is filled by E86. Residues 400 to 710 (DVLQTGQQIW…GWRAGRDLQR (311 aa)) form a transpeptidase region. S465 acts as the Acyl-ester intermediate; for transpeptidase activity in catalysis.

The protein in the N-terminal section; belongs to the glycosyltransferase 51 family. This sequence in the C-terminal section; belongs to the transpeptidase family.

The protein localises to the cell inner membrane. It carries out the reaction [GlcNAc-(1-&gt;4)-Mur2Ac(oyl-L-Ala-gamma-D-Glu-L-Lys-D-Ala-D-Ala)](n)-di-trans,octa-cis-undecaprenyl diphosphate + beta-D-GlcNAc-(1-&gt;4)-Mur2Ac(oyl-L-Ala-gamma-D-Glu-L-Lys-D-Ala-D-Ala)-di-trans,octa-cis-undecaprenyl diphosphate = [GlcNAc-(1-&gt;4)-Mur2Ac(oyl-L-Ala-gamma-D-Glu-L-Lys-D-Ala-D-Ala)](n+1)-di-trans,octa-cis-undecaprenyl diphosphate + di-trans,octa-cis-undecaprenyl diphosphate + H(+). The catalysed reaction is Preferential cleavage: (Ac)2-L-Lys-D-Ala-|-D-Ala. Also transpeptidation of peptidyl-alanyl moieties that are N-acyl substituents of D-alanine.. Its pathway is cell wall biogenesis; peptidoglycan biosynthesis. Cell wall formation. Synthesis of cross-linked peptidoglycan from the lipid intermediates. The enzyme has a penicillin-insensitive transglycosylase N-terminal domain (formation of linear glycan strands) and a penicillin-sensitive transpeptidase C-terminal domain (cross-linking of the peptide subunits). This chain is Penicillin-binding protein 1A (mrcA), found in Escherichia coli (strain K12).